Reading from the N-terminus, the 495-residue chain is MRSPVRDLARNDGEESTDRTPLLPGAPRAEAAPVCCSARYNLAILAFFGFFIVYALRVNLSVALVDMVDSNTTLEDNRTSKACPEHSAPIKVHHNQTGKKYQWDAETQGWILGSFFYGYIITQIPGGYVASKIGGKMLLGFGILGTAVLTLFTPIAADLGVGPLIVLRALEGLGEGVTFPAMHAMWSSWAPPLERSKLLSISYAGAQLGTVISLPLSGIICYYMNWTYVFYFFGTIGIFWFLLWIWLVSDTPQKHKRISHYEKEYILSSLRNQLSSQKSVPWVPILKSLPLWAIVVAHFSYNWTFYTLLTLLPTYMKEILRFNVQENGFLSSLPYLGSWLCMILSGQAADNLRAKWNFSTLCVRRIFSLIGMIGPAVFLVAAGFIGCDYSLAVAFLTISTTLGGFCSSGFSINHLDIAPSYAGILLGITNTFATIPGMVGPVIAKSLTPDNTVGEWQTVFYIAAAINVFGAIFFTLFAKGEVQNWALNDHHGHRH.

Positions 1–18 are enriched in basic and acidic residues; sequence MRSPVRDLARNDGEESTD. The tract at residues 1-24 is disordered; it reads MRSPVRDLARNDGEESTDRTPLLP. Residues 1–41 lie on the Cytoplasmic side of the membrane; the sequence is MRSPVRDLARNDGEESTDRTPLLPGAPRAEAAPVCCSARYN. S3 bears the Phosphoserine mark. The Dileucine internalization motif signature appears at 22 to 23; it reads LL. A helical transmembrane segment spans residues 42-62; sequence LAILAFFGFFIVYALRVNLSV. At 63–109 the chain is on the lumenal side; it reads ALVDMVDSNTTLEDNRTSKACPEHSAPIKVHHNQTGKKYQWDAETQG. N71, N77, and N95 each carry an N-linked (GlcNAc...) asparagine glycan. A helical membrane pass occupies residues 110–130; that stretch reads WILGSFFYGYIITQIPGGYVA. Topologically, residues 131–136 are cytoplasmic; sequence SKIGGK. Residues 137 to 157 form a helical membrane-spanning segment; the sequence is MLLGFGILGTAVLTLFTPIAA. A topological domain (lumenal) is located at residue D158. A helical membrane pass occupies residues 159–179; that stretch reads LGVGPLIVLRALEGLGEGVTF. Over 180–200 the chain is Cytoplasmic; it reads PAMHAMWSSWAPPLERSKLLS. The helical transmembrane segment at 201 to 221 threads the bilayer; sequence ISYAGAQLGTVISLPLSGIIC. The Lumenal segment spans residues 222 to 227; that stretch reads YYMNWT. Residues 228–248 traverse the membrane as a helical segment; sequence YVFYFFGTIGIFWFLLWIWLV. At 249-279 the chain is on the cytoplasmic side; it reads SDTPQKHKRISHYEKEYILSSLRNQLSSQKS. Residues 280–300 form a helical membrane-spanning segment; sequence VPWVPILKSLPLWAIVVAHFS. Residues 301–328 are Lumenal-facing; the sequence is YNWTFYTLLTLLPTYMKEILRFNVQENG. The chain crosses the membrane as a helical span at residues 329-349; the sequence is FLSSLPYLGSWLCMILSGQAA. Topologically, residues 350 to 365 are cytoplasmic; sequence DNLRAKWNFSTLCVRR. A helical membrane pass occupies residues 366–386; that stretch reads IFSLIGMIGPAVFLVAAGFIG. The Lumenal segment spans residues 387 to 391; it reads CDYSL. A helical membrane pass occupies residues 392–412; sequence AVAFLTISTTLGGFCSSGFSI. At 413–423 the chain is on the cytoplasmic side; it reads NHLDIAPSYAG. A helical transmembrane segment spans residues 424–444; that stretch reads ILLGITNTFATIPGMVGPVIA. Residues 445–457 are Lumenal-facing; it reads KSLTPDNTVGEWQ. Residues 458–478 form a helical membrane-spanning segment; the sequence is TVFYIAAAINVFGAIFFTLFA. At 479-495 the chain is on the cytoplasmic side; sequence KGEVQNWALNDHHGHRH.

The protein belongs to the major facilitator superfamily. Sodium/anion cotransporter family. As to expression, in the adult, detected in placenta, kidney and pancreas. Abundant in the endothelial cells of tumors from ovary, colon, breast and lung, but is not detected in endothelial cells from the corresponding normal tissues. Highly expressed in salivary glands and liver, with lower levels of expression in brain, spleen kidney, muscle and pancreas. Expressed in acinar cells of salivary glands (at protein level).

Its subcellular location is the basolateral cell membrane. It localises to the cytoplasmic vesicle. The protein resides in the secretory vesicle. It is found in the synaptic vesicle membrane. The protein localises to the lysosome membrane. The enzyme catalyses N-acetylneuraminate(in) + H(+)(in) = N-acetylneuraminate(out) + H(+)(out). It carries out the reaction D-glucuronate(out) + H(+)(out) = D-glucuronate(in) + H(+)(in). The catalysed reaction is 2 nitrate(out) + H(+)(out) = 2 nitrate(in) + H(+)(in). It catalyses the reaction L-aspartate(out) = L-aspartate(in). The enzyme catalyses L-glutamate(out) = L-glutamate(in). It carries out the reaction N-acetyl-L-aspartyl-L-glutamate(out) = N-acetyl-L-aspartyl-L-glutamate(in). Functionally, multifunctional anion transporter that operates via two distinct transport mechanisms, namely proton-coupled anion cotransport and membrane potential-dependent anion transport. Electroneutral proton-coupled acidic monosaccharide symporter, with a sugar to proton stoichiometry of 1:1. Exports glucuronic acid and free sialic acid derived from sialoglycoconjugate degradation out of lysosomes, driven by outwardly directed lysosomal pH gradient. May regulate lysosome function and metabolism of sialylated conjugates that impact oligodendrocyte lineage differentiation and myelinogenesis in the central nervous system. Electrogenic proton-coupled nitrate symporter that transports nitrate ions across the basolateral membrane of salivary gland acinar cells, with nitrate to proton stoichiometry of 2:1. May contribute to nitrate clearance from serum by salivary glands, where it is further concentrated and secreted in the saliva. Uses membrane potential to drive the uptake of acidic amino acids and peptides into synaptic vesicles. Responsible for synaptic vesicular storage of L-aspartate and L-glutamate in pinealocytes as well as vesicular uptake of N-acetyl-L-aspartyl-L-glutamate neuropeptide, relevant to aspartegic-associated glutamatergic neurotransmission and activation of metabotropic receptors that inhibit subsequent transmitter release. In terms of biological role, receptor for CM101, a polysaccharide produced by group B Streptococcus with antipathoangiogenic properties. This chain is Sialin (SLC17A5), found in Homo sapiens (Human).